A 200-amino-acid chain; its full sequence is Small ribosomal subunit protein uS5 (200 aa).

Over residues 1-12 (MGRPRTSQTRGQ) the composition is skewed to polar residues. The segment at 1-49 (MGRPRTSQTRGQGPSGATGGNPRGGGSTTRERDARGARPGERDGGSEIQ) is disordered. Gly residues predominate over residues 13-27 (GPSGATGGNPRGGGS). Positions 29–49 (TRERDARGARPGERDGGSEIQ) are enriched in basic and acidic residues. One can recognise an S5 DRBM domain in the interval 48–111 (IQDRVVQIRR…EKARHAMFDV (64 aa)).

This sequence belongs to the universal ribosomal protein uS5 family. In terms of assembly, part of the 30S ribosomal subunit. Contacts proteins S4 and S8.

With S4 and S12 plays an important role in translational accuracy. In terms of biological role, located at the back of the 30S subunit body where it stabilizes the conformation of the head with respect to the body. This Rubrobacter xylanophilus (strain DSM 9941 / JCM 11954 / NBRC 16129 / PRD-1) protein is Small ribosomal subunit protein uS5.